Reading from the N-terminus, the 313-residue chain is Ribosomal protein L11 methyltransferase (313 aa).

The S-adenosyl-L-methionine site is built by threonine 161, glycine 182, aspartate 204, and asparagine 247.

Belongs to the methyltransferase superfamily. PrmA family.

It is found in the cytoplasm. The catalysed reaction is L-lysyl-[protein] + 3 S-adenosyl-L-methionine = N(6),N(6),N(6)-trimethyl-L-lysyl-[protein] + 3 S-adenosyl-L-homocysteine + 3 H(+). Methylates ribosomal protein L11. In Halalkalibacterium halodurans (strain ATCC BAA-125 / DSM 18197 / FERM 7344 / JCM 9153 / C-125) (Bacillus halodurans), this protein is Ribosomal protein L11 methyltransferase.